The following is a 290-amino-acid chain: Membrane protein insertase YidC 2 (290 aa).

An N-terminal signal peptide occupies residues 1–19 (MKKKALLPLFLGIMIFLAG). Cys-20 carries N-palmitoyl cysteine lipidation. Cys-20 carries the S-diacylglycerol cysteine lipid modification. A run of 5 helical transmembrane segments spans residues 56-76 (FGLA…PFML), 134-154 (MLGC…YFVL), 176-196 (PDIW…VVSS), 211-231 (MVIS…ALGL), and 232-252 (YWSV…IYYS). The tract at residues 266 to 290 (YEREHNPSSKKKGKNTQVVSKKNKK) is disordered. The segment covering 280–290 (NTQVVSKKNKK) has biased composition (polar residues).

The protein belongs to the OXA1/ALB3/YidC family. Type 2 subfamily.

The protein resides in the cell membrane. Its function is as follows. Required for the insertion and/or proper folding and/or complex formation of integral membrane proteins into the membrane. Involved in integration of membrane proteins that insert both dependently and independently of the Sec translocase complex, as well as at least some lipoproteins. This chain is Membrane protein insertase YidC 2, found in Staphylococcus epidermidis (strain ATCC 35984 / DSM 28319 / BCRC 17069 / CCUG 31568 / BM 3577 / RP62A).